Consider the following 512-residue polypeptide: Gasdermin-E (512 aa).

The interval 1 to 56 (MFAKATRNFLKEVDAGGDLISVSHLNDSDKLQLLSLVTKKKRYWCWQRPKYQILSA) is membrane targeting domain. The residue at position 45 (C45) is an S-(2-succinyl)cysteine. A Glycyl lysine isopeptide (Lys-Gly) (interchain with G-Cter in ubiquitin) cross-link involves residue K120. An S-(2-succinyl)cysteine mark is found at C156, C168, and C180. K189 participates in a covalent cross-link: Glycyl lysine isopeptide (Lys-Gly) (interchain with G-Cter in ubiquitin). Residues C235, C411, and C420 each carry the S-(2-succinyl)cysteine modification.

This sequence belongs to the gasdermin family. Homooligomer; homooligomeric ring-shaped pore complex containing 27-28 subunits when inserted in the membrane. In terms of processing, cleavage at Asp-270 by CASP3 (mature and uncleaved precursor forms) or granzyme B (GZMB) relieves autoinhibition and is sufficient to initiate pyroptosis. Succination by the Krebs cycle intermediate fumarate, which leads to S-(2-succinyl)cysteine residues, inhibits processing by caspases, and ability to initiate pyroptosis. Succination modification is catalyzed by a non-enzymatic reaction caused by an accumulation of fumarate. Post-translationally, ubiquitinated on Lys-120 and Lys-189 via 'Lys-48'-linked polyubiquitin chains, leading to proteasomal degradation. Deubiquitinated by USP48, leading to increased stability. In terms of processing, palmitoylated. In terms of tissue distribution, expressed in spleen, kidney, large and small intestine, testicle, stomach and by CD4(+)CD(8+) T cells in thymus. Expressed by macrophages.

The protein localises to the cell membrane. It is found in the cytoplasm. The protein resides in the cytosol. Its activity is regulated as follows. The full-length protein before cleavage is inactive: intramolecular interactions between N- and C-terminal domains mediate autoinhibition in the absence of activation signal. The intrinsic pyroptosis-inducing activity is carried by the released N-terminal moiety (Gasdermin-E, N-terminal) following cleavage by CASP3 or granzyme B (GZMB). Activated by NLRP1 in the absence of GSDMD expression: NLRP1 cleaves and activates CASP8, promoting downstream activation of CASP3 and subsequent activation of GSDME. Precursor of a pore-forming protein that converts non-inflammatory apoptosis to pyroptosis. This form constitutes the precursor of the pore-forming protein: upon cleavage, the released N-terminal moiety (Gasdermin-E, N-terminal) binds to membranes and forms pores, triggering pyroptosis. Its function is as follows. Pore-forming protein produced by cleavage by CASP3 or granzyme B (GZMB), which converts non-inflammatory apoptosis to pyroptosis or promotes granzyme-mediated pyroptosis, respectively. After cleavage, moves to the plasma membrane, homooligomerizes within the membrane and forms pores of 10-15 nanometers (nm) of inner diameter, allowing the release of mature interleukins (IL1B and IL16) and triggering pyroptosis. Binds to inner leaflet lipids, bisphosphorylated phosphatidylinositols, such as phosphatidylinositol (4,5)-bisphosphate. Cleavage by CASP3 switches CASP3-mediated apoptosis induced by TNF or danger signals, such as chemotherapy drugs, to pyroptosis. Mediates secondary necrosis downstream of the mitochondrial apoptotic pathway and CASP3 activation as well as in response to viral agents. Exhibits bactericidal activity. Cleavage by GZMB promotes tumor suppressor activity by triggering robust anti-tumor immunity. Suppresses tumors by mediating granzyme-mediated pyroptosis in target cells of natural killer (NK) cells: cleavage by granzyme B (GZMB), delivered to target cells from NK-cells, triggers pyroptosis of tumor cells and tumor suppression. May play a role in the p53/TP53-regulated cellular response to DNA damage. This Mus musculus (Mouse) protein is Gasdermin-E.